Reading from the N-terminus, the 266-residue chain is Serine/arginine-rich splicing factor 12 (266 aa).

The tract at residues 42-266 (ARPRRPRAPR…SRSYHHKNSW (225 aa)) is disordered. Over residues 43-62 (RPRRPRAPRPRLRLRGRPGR) the composition is skewed to basic residues. Residues 102-114 (KSKERHLCSPSDH) are compositionally biased toward basic and acidic residues. The segment covering 115–127 (RRSRSPSQRRSRS) has biased composition (basic residues). A compositionally biased stretch (basic and acidic residues) spans 133 to 144 (GRDRRHSDSLKE). The segment covering 151-166 (SYSQSKSRSKSLPRQS) has biased composition (low complexity). The span at 183–194 (GRSRSKSLPKRS) shows a compositional bias: basic residues. Polar residues-rich tracts occupy residues 202–212 (SRSPQKQTGSG) and 235–244 (AYTSSGSKTQ). The segment covering 245–266 (TTKHSHLRSHSRSRSYHHKNSW) has biased composition (basic residues).

It belongs to the splicing factor SR family.

Its subcellular location is the nucleus. Its function is as follows. Splicing factor that seems to antagonize SR proteins in pre-mRNA splicing regulation. This is Serine/arginine-rich splicing factor 12 (Srsf12) from Mus musculus (Mouse).